Here is a 310-residue protein sequence, read N- to C-terminus: AMMECR1-like protein (310 aa).

Residues 26-95 are disordered; that stretch reads LSGSGTHSHG…LSPLPRPNGT (70 aa). Residues 28 to 66 show a composition bias toward polar residues; sequence GSGTHSHGNQSTTVPGSSSGPLQNHQHVDSSSGRENVSD. Serine 74 carries the phosphoserine modification. The AMMECR1 domain occupies 97-291; that stretch reads NTTKNLVVTA…ISYAEYIASR (195 aa).

The sequence is that of AMMECR1-like protein (AMMECR1L) from Homo sapiens (Human).